An 88-amino-acid chain; its full sequence is Putative membrane protein insertion efficiency factor (88 aa).

The segment at 68–88 (VPPPNSDTRARGEADARSHRL) is disordered. Residues 75 to 88 (TRARGEADARSHRL) are compositionally biased toward basic and acidic residues.

This sequence belongs to the UPF0161 family.

The protein localises to the cell inner membrane. Could be involved in insertion of integral membrane proteins into the membrane. This is Putative membrane protein insertion efficiency factor from Burkholderia ambifaria (strain MC40-6).